A 489-amino-acid polypeptide reads, in one-letter code: Capsid protein (489 aa).

A disordered region spans residues 79-144 (GETSEEESDS…QPKTIPGQKQ (66 aa)). The segment covering 81–94 (TSEEESDSGEEPEF) has biased composition (acidic residues). A compositionally biased stretch (basic and acidic residues) spans 95-110 (EQVRMDRTGGTEIPKE). The Nuclear localization signal motif lies at 122–125 (RKRK). The segment covering 135–144 (QPKTIPGQKQ) has biased composition (polar residues). The segment at 412–429 (CRCWICNIEGHYANECPN) adopts a CCHC-type zinc-finger fold. The segment at 467–489 (EEEEETSTEESDGSSTSEDSDSD) is disordered.

The protein belongs to the caulimoviridae capsid protein family. Interacts (via nuclear localization signal) with host importin alpha.

It localises to the virion. It is found in the host nucleus. In terms of biological role, self assembles to form an icosahedral capsid, about 50 nm in diameter, nm, composed of 420 subunits of the viral capsid protein. The capsid encapsulates the genomic dsDNA. Following virus entry into host cell, provides nuclear import of the viral genome. Virus particles do not enter the nucleus, but dock at the nuclear membrane through the interaction with host importins. This chain is Capsid protein, found in Arabidopsis thaliana (Mouse-ear cress).